Reading from the N-terminus, the 272-residue chain is Tryptophan synthase alpha chain (272 aa).

Residues glutamate 49 and glutamate 60 each act as proton acceptor in the active site.

Belongs to the TrpA family. As to quaternary structure, tetramer of two alpha and two beta chains.

The catalysed reaction is (1S,2R)-1-C-(indol-3-yl)glycerol 3-phosphate + L-serine = D-glyceraldehyde 3-phosphate + L-tryptophan + H2O. It participates in amino-acid biosynthesis; L-tryptophan biosynthesis; L-tryptophan from chorismate: step 5/5. The alpha subunit is responsible for the aldol cleavage of indoleglycerol phosphate to indole and glyceraldehyde 3-phosphate. The protein is Tryptophan synthase alpha chain of Legionella pneumophila (strain Corby).